Reading from the N-terminus, the 214-residue chain is Holliday junction branch migration complex subunit RuvA (214 aa).

The domain I stretch occupies residues 1–68; that stretch reads MIGFLQGKVL…QPKPVLIGFD (68 aa). The interval 69 to 146 is domain II; that stretch reads SAEEKDFFQL…RFLLAADEAG (78 aa). The flexible linker stretch occupies residues 147-160; that stretch reads AGDGVSKTGTPSLP. Residues 161 to 214 are domain III; it reads IQKAIDQVVDVLVQQLGHTPSAAKMMVAQALDRDPEIMTPEALFDEVYKGDVDA.

It belongs to the RuvA family. In terms of assembly, homotetramer. Forms an RuvA(8)-RuvB(12)-Holliday junction (HJ) complex. HJ DNA is sandwiched between 2 RuvA tetramers; dsDNA enters through RuvA and exits via RuvB. An RuvB hexamer assembles on each DNA strand where it exits the tetramer. Each RuvB hexamer is contacted by two RuvA subunits (via domain III) on 2 adjacent RuvB subunits; this complex drives branch migration. In the full resolvosome a probable DNA-RuvA(4)-RuvB(12)-RuvC(2) complex forms which resolves the HJ.

Its subcellular location is the cytoplasm. Functionally, the RuvA-RuvB-RuvC complex processes Holliday junction (HJ) DNA during genetic recombination and DNA repair, while the RuvA-RuvB complex plays an important role in the rescue of blocked DNA replication forks via replication fork reversal (RFR). RuvA specifically binds to HJ cruciform DNA, conferring on it an open structure. The RuvB hexamer acts as an ATP-dependent pump, pulling dsDNA into and through the RuvAB complex. HJ branch migration allows RuvC to scan DNA until it finds its consensus sequence, where it cleaves and resolves the cruciform DNA. In Desulforapulum autotrophicum (strain ATCC 43914 / DSM 3382 / VKM B-1955 / HRM2) (Desulfobacterium autotrophicum), this protein is Holliday junction branch migration complex subunit RuvA.